The primary structure comprises 402 residues: Imidazolonepropionase (402 aa).

Fe(3+)-binding residues include His69 and His71. Zn(2+) is bound by residues His69 and His71. Residues Arg78, Tyr141, and His174 each contribute to the 4-imidazolone-5-propanoate site. Residue Tyr141 coordinates N-formimidoyl-L-glutamate. His239 contributes to the Fe(3+) binding site. Residue His239 coordinates Zn(2+). Gln242 lines the 4-imidazolone-5-propanoate pocket. Asp314 serves as a coordination point for Fe(3+). Residue Asp314 coordinates Zn(2+). Residues Asn316 and Gly318 each coordinate N-formimidoyl-L-glutamate. Thr319 provides a ligand contact to 4-imidazolone-5-propanoate.

Belongs to the metallo-dependent hydrolases superfamily. HutI family. The cofactor is Zn(2+). Fe(3+) is required as a cofactor.

The protein localises to the cytoplasm. The enzyme catalyses 4-imidazolone-5-propanoate + H2O = N-formimidoyl-L-glutamate. The protein operates within amino-acid degradation; L-histidine degradation into L-glutamate; N-formimidoyl-L-glutamate from L-histidine: step 3/3. Its function is as follows. Catalyzes the hydrolytic cleavage of the carbon-nitrogen bond in imidazolone-5-propanoate to yield N-formimidoyl-L-glutamate. It is the third step in the universal histidine degradation pathway. In Maricaulis maris (strain MCS10) (Caulobacter maris), this protein is Imidazolonepropionase.